Consider the following 410-residue polypeptide: MARTKFERTKPHVNIGTIGHVDHGKTTLTAAISAVLASKDNTVQLKKFEEIDSAPEERARGITINTSHVEYQTEKRHYAHVDCPGHADYVKNMITGAAQMDGAILVVSAADGPMPQTREHILLAKQVGVPSIVVFLNKADMVDDPELLELVELEVRELLSKYDFPGDTIPFVTGSALLALEACMKNPKIGEGKDKWVDKIFELMKIVDEYIPTPQRDVDKSFLMAVEDVFSITGRGTVATGRIERGRVKVGETIEIVGLKNTKTTTVTGLEMFQKTLDEGIAGDNVGVLLRGVQKTDIERGMVLAKPGSITPHTKFEAEVYVLTKEEGGRHTPFFPGYRPQFYVRTTDVTGTIEDFTADDGSKAEMVMPGDRIKMCVNLIYPVAIEQGMRFAIREGGRTVGAGVVTKILE.

Positions 10-215 constitute a tr-type G domain; the sequence is KPHVNIGTIG…IVDEYIPTPQ (206 aa). Positions 19–26 are G1; it reads GHVDHGKT. 19-26 lines the GTP pocket; it reads GHVDHGKT. Position 26 (Thr-26) interacts with Mg(2+). The interval 61 to 65 is G2; that stretch reads GITIN. Residues 82-85 form a G3 region; it reads DCPG. GTP is bound by residues 82–86 and 137–140; these read DCPGH and NKAD. Positions 137 to 140 are G4; it reads NKAD. A G5 region spans residues 175 to 177; it reads SAL.

Belongs to the TRAFAC class translation factor GTPase superfamily. Classic translation factor GTPase family. EF-Tu/EF-1A subfamily.

It localises to the plastid. Its subcellular location is the chloroplast. It catalyses the reaction GTP + H2O = GDP + phosphate + H(+). In terms of biological role, GTP hydrolase that promotes the GTP-dependent binding of aminoacyl-tRNA to the A-site of ribosomes during protein biosynthesis. This is Elongation factor Tu, chloroplastic (tufA) from Cyanidioschyzon merolae (strain NIES-3377 / 10D) (Unicellular red alga).